A 238-amino-acid chain; its full sequence is Uridylate kinase (238 aa).

12–15 (KLSG) is an ATP binding site. Glycine 54 serves as a coordination point for UMP. Residues glycine 55 and arginine 59 each coordinate ATP. UMP-binding positions include aspartate 74 and 135-142 (TGNPFFTT). ATP contacts are provided by threonine 162, asparagine 163, tyrosine 168, and aspartate 171.

This sequence belongs to the UMP kinase family. Homohexamer.

It localises to the cytoplasm. It catalyses the reaction UMP + ATP = UDP + ADP. The protein operates within pyrimidine metabolism; CTP biosynthesis via de novo pathway; UDP from UMP (UMPK route): step 1/1. With respect to regulation, inhibited by UTP. Catalyzes the reversible phosphorylation of UMP to UDP. This Rhodopseudomonas palustris (strain HaA2) protein is Uridylate kinase.